We begin with the raw amino-acid sequence, 385 residues long: Probable thioesterase PNKD (385 aa).

Residues 32-42 are compositionally biased toward polar residues; the sequence is KASQNRTRALQ. The interval 32–56 is disordered; it reads KASQNRTRALQSHSSPECKEEPEPL. The residue at position 121 (Val-121) is a Phosphoserine. Residues His-172, His-174, Asp-176, His-177, His-229, Asp-253, and His-291 each contribute to the Zn(2+) site.

It belongs to the metallo-beta-lactamase superfamily. Glyoxalase II family. As to quaternary structure, isoform 2 interacts with the sarcomeric proteins, MRLC2, MYOM1 and ENO3. Requires Zn(2+) as cofactor. Post-translationally, undergoes cleavage at the N-terminus. In terms of tissue distribution, expressed in many discrete areas of the brain.

The protein localises to the cell membrane. Its subcellular location is the mitochondrion. It localises to the cytoplasm. It carries out the reaction a thioester + H2O = a thiol + a carboxylate + H(+). Probable thioesterase that may play a role in cellular detoxification processes; it likely acts on a yet-unknown alpha-hydroxythioester substrate. In vitro, it is able to catalyze the hydrolysis of S-D-lactoyl-glutathione to form glutathione and D-lactic acid at very low rate, though this reaction is not physiologically relevant in vivo. In Mus musculus (Mouse), this protein is Probable thioesterase PNKD (Pnkd).